The sequence spans 365 residues: MASAFCSLCPTPTSLFSSHALIPTLQWRSSSSSRSPPLHISRVLSVETVPLSPSFTWNDVFENSRKEYVPQNSSDLTGFLEKVDRCNRGLEKLGEFIPFVIEEQIVGYIHKGFTKYLRDFNDIFTFSQYGGHVTLNMMLDKPEERTRAVAHVIKILGNKGIIPGIRNELYPVKPSFNAPAFFSIERAAAPYFGLKGYAIHVNGYVERDGQKFLWIGKRSLAKSTYPGKLDHLVAGGLPHGISVCENLVKECEEEAGISKVLADRAIAVGVVSYMDIDRYCFTRDVLFCYDLELPQDFVPTNQDGEVDSFRLIPVAQVANVVRKTSFFKDSCSLVIIDFLFRHGLIRPESPGYLDLYRRLRNGDCS.

A chloroplast-targeting transit peptide spans 1 to 30; that stretch reads MASAFCSLCPTPTSLFSSHALIPTLQWRSS. Residues 196–337 form the Nudix hydrolase domain; that stretch reads GYAIHVNGYV…KDSCSLVIID (142 aa). The Nudix box signature appears at 235 to 256; sequence GGLPHGISVCENLVKECEEEAG. Residues Glu-250 and Glu-254 each coordinate Mg(2+).

This sequence belongs to the Nudix hydrolase family. The cofactor is Mg(2+). Mn(2+) is required as a cofactor. Expressed in leaves.

It is found in the plastid. It localises to the chloroplast. Its function is as follows. Probably mediates the hydrolysis of some nucleoside diphosphate derivatives. This Arabidopsis thaliana (Mouse-ear cress) protein is Nudix hydrolase 24, chloroplastic (NUDT24).